Reading from the N-terminus, the 591-residue chain is NADH-quinone oxidoreductase subunit C/D (591 aa).

Residues 1-182 (MVTVVENTDP…TPYFLNTAKQ (182 aa)) are NADH dehydrogenase I subunit C. Residues 206–591 (DFMFLNIGPN…IDIVMADCDR (386 aa)) are NADH dehydrogenase I subunit D.

The protein in the N-terminal section; belongs to the complex I 30 kDa subunit family. It in the C-terminal section; belongs to the complex I 49 kDa subunit family. NDH-1 is composed of 13 different subunits. Subunits NuoB, CD, E, F, and G constitute the peripheral sector of the complex.

The protein localises to the cell inner membrane. It catalyses the reaction a quinone + NADH + 5 H(+)(in) = a quinol + NAD(+) + 4 H(+)(out). In terms of biological role, NDH-1 shuttles electrons from NADH, via FMN and iron-sulfur (Fe-S) centers, to quinones in the respiratory chain. The immediate electron acceptor for the enzyme in this species is believed to be ubiquinone. Couples the redox reaction to proton translocation (for every two electrons transferred, four hydrogen ions are translocated across the cytoplasmic membrane), and thus conserves the redox energy in a proton gradient. This Psychrobacter cryohalolentis (strain ATCC BAA-1226 / DSM 17306 / VKM B-2378 / K5) protein is NADH-quinone oxidoreductase subunit C/D.